Consider the following 410-residue polypeptide: Magnesium transporter NIPA3 (410 aa).

At 1–67 (MGAQVRLPPG…ISANVENKYS (67 aa)) the chain is on the extracellular side. Residues N25, N35, N50, and N55 are each glycosylated (N-linked (GlcNAc...) asparagine). The chain crosses the membrane as a helical span at residues 68–88 (LYVGLVLAVSSSIFIGSSFIL). Topologically, residues 89–114 (KKKGLLQLASKGFTRAGQGGHSYLKE) are cytoplasmic. The chain crosses the membrane as a helical span at residues 115–135 (WLWWVGLLSMGAGEAANFAAY). A topological domain (extracellular) is located at residue A136. The chain crosses the membrane as a helical span at residues 137 to 157 (FAPATLVTPLGALSVLISAIL). Topologically, residues 158–165 (SSYFLNEH) are cytoplasmic. Residues 166–186 (LNIHGKIGCILSILGSTVMVI) traverse the membrane as a helical segment. Residues 187–207 (HAPQEEEVTSLHEMEMKLRDP) lie on the Extracellular side of the membrane. A helical transmembrane segment spans residues 208–228 (GFISFAVIITVISLVLILIVA). Residues 229 to 233 (PKKGQ) are Cytoplasmic-facing. The chain crosses the membrane as a helical span at residues 234-254 (TNILVYISICSLIGAFSVSSV). Residues 255 to 273 (KGLGIAIKELIEWKPVYKH) are Extracellular-facing. Residues 274–294 (PLVFVLLAVLVLSVTTQINYL) traverse the membrane as a helical segment. Over 295-305 (NKALDTFNTSL) the chain is Cytoplasmic. A helical transmembrane segment spans residues 306–326 (VTPIYYVFFTSMVVTCSAILF). At 327–336 (QEWYGMTAGD) the chain is on the extracellular side. A helical membrane pass occupies residues 337–357 (IIGTLSGFFTIIIGIFLLHAF). At 358–410 (KNTDITWSELTSTAKKEAVSLNVNENNYVLLENLECSAPGYNDDVTLFSRTDD) the chain is on the cytoplasmic side.

This sequence belongs to the NIPA family. Expressed in the pancreatic islets.

Its subcellular location is the golgi apparatus membrane. It catalyses the reaction Mg(2+)(in) = Mg(2+)(out). Its function is as follows. Acts as a Mg(2+) transporter. Can also transport other divalent cations such as Fe(2+), Sr(2+), Ba(2+), Mn(2+), Cu(2+) and Co(2+) but to a much less extent than Mg(2+). This chain is Magnesium transporter NIPA3 (NIPAL1), found in Homo sapiens (Human).